The following is a 390-amino-acid chain: GTPase Obg/CgtA (390 aa).

The 159-residue stretch at 1–159 (MKFVDEAVIK…RDIRLELLLL (159 aa)) folds into the Obg domain. One can recognise an OBG-type G domain in the interval 160–333 (ADVGMLGMPN…LCMKLAEFMD (174 aa)). GTP-binding positions include 166–173 (GMPNAGKS), 191–195 (FTTLV), 213–216 (DIPG), 283–286 (NKVD), and 314–316 (SAA). 2 residues coordinate Mg(2+): Ser173 and Thr193.

This sequence belongs to the TRAFAC class OBG-HflX-like GTPase superfamily. OBG GTPase family. Monomer. Interacts with SpoT (AC Q9KNM2) in a yeast 2-hybrid assay. The cofactor is Mg(2+).

It localises to the cytoplasm. Its function is as follows. Depletion experiments lead to gene down regulation and a dramatic increase in ppGpp levels, like those seen in the stringent response. There is no change in cell morphology in depletion experiments, but cells are very sensitive to the DNA-damaging agent hydroxyurea and are very elongated. Overexpression reduces growth and leads to elongated cells. Overexpression of proteins with C-terminal deletions of 29 or 62 amino acids showed fewer elongated cells. An essential GTPase which binds GTP, GDP and possibly (p)ppGpp with moderate affinity, with high nucleotide exchange rates and a fairly low GTP hydrolysis rate. It may play a role in control of the cell cycle, stress response, ribosome biogenesis and in those bacteria that undergo differentiation, in morphogenesis control. GTPase activity is stimulated by 50S ribosomal subunits. The protein is GTPase Obg/CgtA of Vibrio cholerae serotype O1 (strain ATCC 39315 / El Tor Inaba N16961).